A 406-amino-acid chain; its full sequence is MNSKKIGAMIAAAVLSLIVMTPAATRKIVQRQTRNSSTAVENSAADESETENVPVSQTHTNDTMTVTSAKDLVAKMTNGWNLGNTMDATAQGLGSEVSWLPLKVTTNKYMIDMLPEAGFNVLRIPVSWGNHIIDDKYTSDPAWMDRVQEIVNYGIDNGLYVILNTHHEEWYMPKPSEKDGDIEEIKAVWAQIADRFKGYDEHLIFEGLNEPRLRGEGAEWTGTSEAREIINEYEKAFVETVRASGGNNGDRCLMITGYAASSAYNNLSAIELPEDSDKLIISVHAYLPYSFALDTKGTDKYDPEDTAIPELFEHLNELFISKGIPVIVGEFGTMNKENTEDRVKCLEDYLAAAAKYDIPCVWWDNYARIGNGENFGLMNRADLEWYFPDLIETFKTYAEKDPASAE.

An N-terminal signal peptide occupies residues 1-43 (MNSKKIGAMIAAAVLSLIVMTPAATRKIVQRQTRNSSTAVENS). Composition is skewed to polar residues over residues 30-41 (QRQTRNSSTAVE) and 51-62 (ENVPVSQTHTND). The disordered stretch occupies residues 30–62 (QRQTRNSSTAVENSAADESETENVPVSQTHTND). The Proton donor role is filled by Glu210. The Nucleophile role is filled by Glu330.

Belongs to the glycosyl hydrolase 5 (cellulase A) family.

The catalysed reaction is Endohydrolysis of (1-&gt;4)-beta-D-glucosidic linkages in cellulose, lichenin and cereal beta-D-glucans.. This is Endoglucanase 1 (Eg I) from Ruminococcus albus.